Here is a 400-residue protein sequence, read N- to C-terminus: tRNA-specific 2-thiouridylase MnmA (400 aa).

ATP-binding positions include 19 to 26 (AMSGGVDS) and leucine 45. Cysteine 113 functions as the Nucleophile in the catalytic mechanism. Cysteine 113 and cysteine 210 form a disulfide bridge. Glycine 137 serves as a coordination point for ATP. The interaction with tRNA stretch occupies residues 160–162 (RDQ). Cysteine 210 serves as the catalytic Cysteine persulfide intermediate.

This sequence belongs to the MnmA/TRMU family.

The protein localises to the cytoplasm. It catalyses the reaction S-sulfanyl-L-cysteinyl-[protein] + uridine(34) in tRNA + AH2 + ATP = 2-thiouridine(34) in tRNA + L-cysteinyl-[protein] + A + AMP + diphosphate + H(+). In terms of biological role, catalyzes the 2-thiolation of uridine at the wobble position (U34) of tRNA, leading to the formation of s(2)U34. The chain is tRNA-specific 2-thiouridylase MnmA from Rhodopseudomonas palustris (strain BisA53).